Reading from the N-terminus, the 143-residue chain is MSMMSEFKEFALKGNVMDLAVGVIIGGAFSGITNSLVEDIIMPIVAFIAGGELNFKNMFILLGDAPEGVAMTYDALKEAGVPLLAYGSFITVLINFLILAFIIFMMVKGMNKMRRKNEVEEVVEETPSEEVLLLREISQKLSK.

3 helical membrane-spanning segments follow: residues 16–36 (VMDLAVGVIIGGAFSGITNSL), 40–60 (IIMPIVAFIAGGELNFKNMFI), and 87–107 (GSFITVLINFLILAFIIFMMV).

The protein belongs to the MscL family. In terms of assembly, homopentamer.

The protein resides in the cell inner membrane. Channel that opens in response to stretch forces in the membrane lipid bilayer. May participate in the regulation of osmotic pressure changes within the cell. This is Large-conductance mechanosensitive channel from Psychrobacter sp. (strain PRwf-1).